Here is a 440-residue protein sequence, read N- to C-terminus: Probable carboxypeptidase AFUB_072730 (440 aa).

A signal peptide spans 1 to 16 (MKPLTSLLLSAALSAA). Asparagine 87 and asparagine 149 each carry an N-linked (GlcNAc...) asparagine glycan. Aspartate 165 is a Zn(2+) binding site. The Proton acceptor role is filled by glutamate 197. Glutamate 198 is a Zn(2+) binding site. Residues asparagine 353 and asparagine 372 are each glycosylated (N-linked (GlcNAc...) asparagine).

This sequence belongs to the peptidase M20A family. Zn(2+) is required as a cofactor.

It is found in the secreted. This Aspergillus fumigatus (strain CBS 144.89 / FGSC A1163 / CEA10) (Neosartorya fumigata) protein is Probable carboxypeptidase AFUB_072730.